Here is a 625-residue protein sequence, read N- to C-terminus: Glutamine--fructose-6-phosphate aminotransferase [isomerizing] (625 aa).

Cys2 serves as the catalytic Nucleophile; for GATase activity. Positions 2–229 constitute a Glutamine amidotransferase type-2 domain; it reads CGIVGFVGRT…NDQIVTITAD (228 aa). 2 consecutive SIS domains span residues 296–436 and 470–615; these read IDES…LRGN and LAQD…VDQP. Lys620 (for Fru-6P isomerization activity) is an active-site residue.

Homodimer.

It localises to the cytoplasm. It carries out the reaction D-fructose 6-phosphate + L-glutamine = D-glucosamine 6-phosphate + L-glutamate. Catalyzes the first step in hexosamine metabolism, converting fructose-6P into glucosamine-6P using glutamine as a nitrogen source. This is Glutamine--fructose-6-phosphate aminotransferase [isomerizing] from Corynebacterium diphtheriae (strain ATCC 700971 / NCTC 13129 / Biotype gravis).